We begin with the raw amino-acid sequence, 247 residues long: 2,3-bisphosphoglycerate-dependent phosphoglycerate mutase (247 aa).

Substrate-binding positions include 8–15 (RHGESQWN), 21–22 (TG), Arg-60, 87–90 (ERHY), Lys-98, 114–115 (RR), and 183–184 (GN). His-9 serves as the catalytic Tele-phosphohistidine intermediate. Glu-87 acts as the Proton donor/acceptor in catalysis.

The protein belongs to the phosphoglycerate mutase family. BPG-dependent PGAM subfamily.

The enzyme catalyses (2R)-2-phosphoglycerate = (2R)-3-phosphoglycerate. The protein operates within carbohydrate degradation; glycolysis; pyruvate from D-glyceraldehyde 3-phosphate: step 3/5. In terms of biological role, catalyzes the interconversion of 2-phosphoglycerate and 3-phosphoglycerate. In Prosthecochloris aestuarii (strain DSM 271 / SK 413), this protein is 2,3-bisphosphoglycerate-dependent phosphoglycerate mutase.